A 196-amino-acid polypeptide reads, in one-letter code: Nucleoside triphosphate pyrophosphatase (196 aa).

D73 serves as the catalytic Proton acceptor.

Belongs to the Maf family. It depends on a divalent metal cation as a cofactor.

It localises to the cytoplasm. The catalysed reaction is a ribonucleoside 5'-triphosphate + H2O = a ribonucleoside 5'-phosphate + diphosphate + H(+). The enzyme catalyses a 2'-deoxyribonucleoside 5'-triphosphate + H2O = a 2'-deoxyribonucleoside 5'-phosphate + diphosphate + H(+). Its function is as follows. Nucleoside triphosphate pyrophosphatase. May have a dual role in cell division arrest and in preventing the incorporation of modified nucleotides into cellular nucleic acids. This chain is Nucleoside triphosphate pyrophosphatase, found in Maricaulis maris (strain MCS10) (Caulobacter maris).